Here is a 212-residue protein sequence, read N- to C-terminus: Adenylate kinase (212 aa).

10 to 15 contributes to the ATP binding site; that stretch reads GAGKGT. The tract at residues 30-59 is NMP; the sequence is AIGDIFRTIIKTSTSEAELINNYVKQGELI. Residues Arg36, 57 to 59, 85 to 88, and Gln92 each bind AMP; these read ELI and GYPR. The segment at 122 to 160 is LID; sequence GRYSCKNCGKIYNRYFLQPKTDNVCDVCGSSTFDYRKDD. An ATP-binding site is contributed by Arg123. Zn(2+)-binding residues include Cys126 and Cys129. 132 to 133 is a binding site for ATP; it reads IY. Positions 146 and 149 each coordinate Zn(2+). AMP is bound by residues Arg157 and Arg168. Residue Lys196 coordinates ATP.

Belongs to the adenylate kinase family. Monomer.

The protein localises to the cytoplasm. It carries out the reaction AMP + ATP = 2 ADP. Its pathway is purine metabolism; AMP biosynthesis via salvage pathway; AMP from ADP: step 1/1. Catalyzes the reversible transfer of the terminal phosphate group between ATP and AMP. Plays an important role in cellular energy homeostasis and in adenine nucleotide metabolism. This is Adenylate kinase from Rickettsia africae (strain ESF-5).